A 368-amino-acid chain; its full sequence is P2X receptor C (368 aa).

At 1 to 24 the chain is on the cytoplasmic side; that stretch reads MLDWDSILAYNTIKVVRIRDRRLG. Residues 25-45 form a helical membrane-spanning segment; sequence ILHLIFMIAIISYVVIYSAII. Residues 46 to 368 lie on the Lumenal side of the membrane; the sequence is KKGYLSIEEP…DKLYHNIEAL (323 aa). The segment at 282 to 295 is pore-forming motif; the sequence is RHAIRLIFIQTGVI.

The protein belongs to the P2X receptor family.

The protein localises to the contractile vacuole membrane. Its function is as follows. P2X receptors are ligand-gated ion channels that play a role in intracellular calcium signaling. ATP does not evoke inward currents in p2xC. Not essential for osmoregulation. In Dictyostelium discoideum (Social amoeba), this protein is P2X receptor C (p2xC).